Here is a 96-residue protein sequence, read N- to C-terminus: Glutamyl-tRNA(Gln) amidotransferase subunit C (96 aa).

The protein belongs to the GatC family. In terms of assembly, heterotrimer of A, B and C subunits.

It catalyses the reaction L-glutamyl-tRNA(Gln) + L-glutamine + ATP + H2O = L-glutaminyl-tRNA(Gln) + L-glutamate + ADP + phosphate + H(+). The enzyme catalyses L-aspartyl-tRNA(Asn) + L-glutamine + ATP + H2O = L-asparaginyl-tRNA(Asn) + L-glutamate + ADP + phosphate + 2 H(+). Functionally, allows the formation of correctly charged Asn-tRNA(Asn) or Gln-tRNA(Gln) through the transamidation of misacylated Asp-tRNA(Asn) or Glu-tRNA(Gln) in organisms which lack either or both of asparaginyl-tRNA or glutaminyl-tRNA synthetases. The reaction takes place in the presence of glutamine and ATP through an activated phospho-Asp-tRNA(Asn) or phospho-Glu-tRNA(Gln). This is Glutamyl-tRNA(Gln) amidotransferase subunit C from Halalkalibacterium halodurans (strain ATCC BAA-125 / DSM 18197 / FERM 7344 / JCM 9153 / C-125) (Bacillus halodurans).